Consider the following 539-residue polypeptide: BTB/POZ domain-containing protein 6 (539 aa).

A signal peptide spans 1–23 (MLLPLACLHGRVAQCLTSLLVLA). The region spanning 137–207 (ADVHFIVGAL…MYSDEIDLEA (71 aa)) is the BTB domain.

It localises to the cytoplasm. In terms of biological role, adapter protein for the cul3 E3 ubiquitin-protein ligase complex. Involved in late neuronal development and muscle formation. The polypeptide is BTB/POZ domain-containing protein 6 (Btbd6) (Mus musculus (Mouse)).